Consider the following 90-residue polypeptide: Sec-independent protein translocase protein TatAo (90 aa).

Residues 8–28 (FPGLPGGPELLIVLLIVVLLF) traverse the membrane as a helical segment. A disordered region spans residues 39–90 (SSGQAMGEFRRGREEIEEELKKGAEGGDDEGENGDEAEADDADATETEAESR). Over residues 46 to 63 (EFRRGREEIEEELKKGAE) the composition is skewed to basic and acidic residues. Acidic residues predominate over residues 64–90 (GGDDEGENGDEAEADDADATETEAESR).

The protein belongs to the TatA/E family. In terms of assembly, forms a complex with TatC. Cytoplasmic and membrane-bound TatA form high-molecular-weight complexes.

Its subcellular location is the cell membrane. It localises to the cytoplasm. Functionally, part of the twin-arginine translocation (Tat) system that transports large folded proteins containing a characteristic twin-arginine motif in their signal peptide across membranes. TatA could form the protein-conducting channel of the Tat system. The chain is Sec-independent protein translocase protein TatAo from Haloferax volcanii (strain ATCC 29605 / DSM 3757 / JCM 8879 / NBRC 14742 / NCIMB 2012 / VKM B-1768 / DS2) (Halobacterium volcanii).